A 109-amino-acid chain; its full sequence is uncharacterized protein (109 aa).

This is an uncharacterized protein from Treponema pallidum (strain Nichols).